Consider the following 235-residue polypeptide: Protocatechuate 3,4-dioxygenase beta chain (235 aa).

Fe cation-binding residues include Y107, Y146, H159, and H161.

Belongs to the intradiol ring-cleavage dioxygenase family. In terms of assembly, the enzyme is an oligomer of 12 copies of the alpha and beta chains. Requires Fe(3+) as cofactor.

It catalyses the reaction 3,4-dihydroxybenzoate + O2 = 3-carboxy-cis,cis-muconate + 2 H(+). Its pathway is aromatic compound metabolism; beta-ketoadipate pathway; 3-carboxy-cis,cis-muconate from 3,4-dihydroxybenzoate: step 1/1. Its function is as follows. Plays an essential role in the utilization of numerous aromatic and hydroaromatic compounds via the beta-ketoadipate pathway. This chain is Protocatechuate 3,4-dioxygenase beta chain (pcaH), found in Burkholderia cepacia (Pseudomonas cepacia).